The sequence spans 231 residues: 2-C-methyl-D-erythritol 2,4-cyclodiphosphate synthase, chloroplastic (231 aa).

Residues 1 to 52 (MATSSTQLLLSSSSLFHSQITKKPFLLPATKIGVWRPKKSLSLSCRPSASVS) constitute a chloroplast transit peptide. Asp-82 and His-84 together coordinate a divalent metal cation. Residues 82–84 (DLH), 108–109 (HS), 112–120 (DVLLHCVVD), 130–132 (DIG), 135–139 (FPDSD), Asp-139, 174–180 (LQRPKIS), and 205–209 (AKTHE) each bind substrate. Position 116 (His-116) interacts with a divalent metal cation.

The protein belongs to the IspF family. As to quaternary structure, homotrimer. Requires a divalent metal cation as cofactor.

Its subcellular location is the plastid. The protein localises to the chloroplast stroma. The catalysed reaction is 4-CDP-2-C-methyl-D-erythritol 2-phosphate = 2-C-methyl-D-erythritol 2,4-cyclic diphosphate + CMP. It participates in isoprenoid biosynthesis; isopentenyl diphosphate biosynthesis via DXP pathway; isopentenyl diphosphate from 1-deoxy-D-xylulose 5-phosphate: step 4/6. Functionally, enzyme of the plastid non-mevalonate pathway for isoprenoid biosynthesis that converts 4-diphosphocytidyl-2C-methyl-D-erythritol 2-phosphate into 2C-methyl-D-erythritol 2,4-cyclodiphosphate and CMP. Is essential for chloroplast development. In Arabidopsis thaliana (Mouse-ear cress), this protein is 2-C-methyl-D-erythritol 2,4-cyclodiphosphate synthase, chloroplastic.